The sequence spans 636 residues: 1-deoxy-D-xylulose-5-phosphate synthase (636 aa).

Thiamine diphosphate contacts are provided by residues H73 and 114-116; that span reads SHA. Residue D146 participates in Mg(2+) binding. Residues 147 to 148, N176, Y287, and E368 contribute to the thiamine diphosphate site; that span reads GA. N176 is a Mg(2+) binding site.

Belongs to the transketolase family. DXPS subfamily. As to quaternary structure, homodimer. Mg(2+) is required as a cofactor. Thiamine diphosphate serves as cofactor.

It carries out the reaction D-glyceraldehyde 3-phosphate + pyruvate + H(+) = 1-deoxy-D-xylulose 5-phosphate + CO2. It participates in metabolic intermediate biosynthesis; 1-deoxy-D-xylulose 5-phosphate biosynthesis; 1-deoxy-D-xylulose 5-phosphate from D-glyceraldehyde 3-phosphate and pyruvate: step 1/1. Functionally, catalyzes the acyloin condensation reaction between C atoms 2 and 3 of pyruvate and glyceraldehyde 3-phosphate to yield 1-deoxy-D-xylulose-5-phosphate (DXP). This chain is 1-deoxy-D-xylulose-5-phosphate synthase, found in Corynebacterium glutamicum (strain ATCC 13032 / DSM 20300 / JCM 1318 / BCRC 11384 / CCUG 27702 / LMG 3730 / NBRC 12168 / NCIMB 10025 / NRRL B-2784 / 534).